Reading from the N-terminus, the 444-residue chain is Acyl-CoA 6-desaturase (444 aa).

Residues 1-131 (MGKGGNQGEG…DMNLFKTNHV (131 aa)) lie on the Cytoplasmic side of the membrane. One can recognise a Cytochrome b5 heme-binding domain in the interval 18-95 (VPTFSWEEIQ…LKPLLIGELA (78 aa)). Residues 132–152 (FFLLLLAHIIALESIAWFTVF) form a helical membrane-spanning segment. Topologically, residues 153–157 (YFGNG) are lumenal. A helical membrane pass occupies residues 158–178 (WIPTLITAFVLATSQAQAGWL). The Cytoplasmic segment spans residues 179 to 264 (QHDYGHLSVY…KYLPYNHQHE (86 aa)). The Histidine box-1 signature appears at 180–184 (HDYGH). Positions 217 to 221 (HFQHH) match the Histidine box-2 motif. A helical transmembrane segment spans residues 265–285 (YFFLIGPPLLIPMYFQYQIIM). Residues 286-305 (TMIVHKNWVDLAWAVSYYIR) are Lumenal-facing. The helical transmembrane segment at 306-326 (FFITYIPFYGILGALLFLNFI) threads the bilayer. The Cytoplasmic portion of the chain corresponds to 327 to 444 (RFLESHWFVW…KLWLDAYLHK (118 aa)). Residues 382 to 386 (QIEHH) carry the Histidine box-3 motif.

Belongs to the fatty acid desaturase type 1 family. As to expression, expressed in a wide array of tissues, highest expression is found in liver followed by brain, lung, heart, and retina. A lower level is found in breast tumor when compared with normal tissues; lowest levels were found in patients with poor prognostic index.

It is found in the endoplasmic reticulum membrane. It catalyses the reaction (9Z,12Z)-octadecadienoyl-CoA + 2 Fe(II)-[cytochrome b5] + O2 + 2 H(+) = (6Z,9Z,12Z)-octadecatrienoyl-CoA + 2 Fe(III)-[cytochrome b5] + 2 H2O. The catalysed reaction is (9Z,12Z,15Z)-octadecatrienoyl-CoA + 2 Fe(II)-[cytochrome b5] + O2 + 2 H(+) = (6Z,9Z,12Z,15Z)-octadecatetraenoyl-CoA + 2 Fe(III)-[cytochrome b5] + 2 H2O. It carries out the reaction hexadecanoyl-CoA + 2 Fe(II)-[cytochrome b5] + O2 + 2 H(+) = (6Z)-hexadecenoyl-CoA + 2 Fe(III)-[cytochrome b5] + 2 H2O. The enzyme catalyses (9Z,12Z,15Z,18Z,21Z)-tetracosapentaenoyl-CoA + 2 Fe(II)-[cytochrome b5] + O2 + 2 H(+) = (6Z,9Z,12Z,15Z,18Z,21Z)-tetracosahexaenoyl-CoA + 2 Fe(III)-[cytochrome b5] + 2 H2O. It catalyses the reaction (11E)-octadecenoyl-CoA + 2 Fe(II)-[cytochrome b5] + O2 + 2 H(+) = (6Z,11E)-octadecadienoyl-CoA + 2 Fe(III)-[cytochrome b5] + 2 H2O. The catalysed reaction is (11Z,14Z)-eicosadienoyl-CoA + 2 Fe(II)-[cytochrome b5] + O2 + 2 H(+) = (8Z,11Z,14Z)-eicosatrienoyl-CoA + 2 Fe(III)-[cytochrome b5] + 2 H2O. It carries out the reaction (11Z,14Z,17Z)-eicosatrienoyl-CoA + 2 Fe(II)-[cytochrome b5] + O2 + 2 H(+) = (8Z,11Z,14Z,17Z)-eicosatetraenoyl-CoA + 2 Fe(III)-[cytochrome b5] + 2 H2O. It participates in lipid metabolism; polyunsaturated fatty acid biosynthesis. Its function is as follows. Involved in the biosynthesis of highly unsaturated fatty acids (HUFA) from the essential polyunsaturated fatty acids (PUFA) linoleic acid (LA) (18:2n-6) and alpha-linolenic acid (ALA) (18:3n-3) precursors, acting as a fatty acyl-coenzyme A (CoA) desaturase that introduces a cis double bond at carbon 6 of the fatty acyl chain. Catalyzes the first and rate limiting step in this pathway which is the desaturation of LA (18:2n-6) and ALA (18:3n-3) into gamma-linoleate (GLA) (18:3n-6) and stearidonate (18:4n-3), respectively. Subsequently, in the biosynthetic pathway of HUFA n-3 series, it desaturates tetracosapentaenoate (24:5n-3) to tetracosahexaenoate (24:6n-3), which is then converted to docosahexaenoate (DHA)(22:6n-3), an important lipid for nervous system function. Desaturates hexadecanate (palmitate) to produce 6Z-hexadecenoate (sapienate), a fatty acid unique to humans and major component of human sebum, that has been implicated in the development of acne and may have potent antibacterial activity. It can also desaturate (11E)-octadecenoate (trans-vaccenoate, the predominant trans fatty acid in human milk) at carbon 6 generating (6Z,11E)-octadecadienoate. In addition to Delta-6 activity, this enzyme exhibits Delta-8 activity with slight biases toward n-3 fatty acyl-CoA substrates. The sequence is that of Acyl-CoA 6-desaturase from Homo sapiens (Human).